The chain runs to 348 residues: Protein RecA (348 aa).

69-76 (GPESSGKT) is a binding site for ATP.

It belongs to the RecA family.

Its subcellular location is the cytoplasm. In terms of biological role, can catalyze the hydrolysis of ATP in the presence of single-stranded DNA, the ATP-dependent uptake of single-stranded DNA by duplex DNA, and the ATP-dependent hybridization of homologous single-stranded DNAs. It interacts with LexA causing its activation and leading to its autocatalytic cleavage. The chain is Protein RecA from Picosynechococcus sp. (strain ATCC 27264 / PCC 7002 / PR-6) (Agmenellum quadruplicatum).